The sequence spans 155 residues: SsrA-binding protein (155 aa).

The segment at 136–155 is disordered; the sequence is RESLKRRQDQRDMQRAMKNY.

Belongs to the SmpB family.

It is found in the cytoplasm. Its function is as follows. Required for rescue of stalled ribosomes mediated by trans-translation. Binds to transfer-messenger RNA (tmRNA), required for stable association of tmRNA with ribosomes. tmRNA and SmpB together mimic tRNA shape, replacing the anticodon stem-loop with SmpB. tmRNA is encoded by the ssrA gene; the 2 termini fold to resemble tRNA(Ala) and it encodes a 'tag peptide', a short internal open reading frame. During trans-translation Ala-aminoacylated tmRNA acts like a tRNA, entering the A-site of stalled ribosomes, displacing the stalled mRNA. The ribosome then switches to translate the ORF on the tmRNA; the nascent peptide is terminated with the 'tag peptide' encoded by the tmRNA and targeted for degradation. The ribosome is freed to recommence translation, which seems to be the essential function of trans-translation. This is SsrA-binding protein from Nostoc sp. (strain PCC 7120 / SAG 25.82 / UTEX 2576).